Here is a 133-residue protein sequence, read N- to C-terminus: ATP synthase epsilon chain (133 aa).

The protein belongs to the ATPase epsilon chain family. F-type ATPases have 2 components, CF(1) - the catalytic core - and CF(0) - the membrane proton channel. CF(1) has five subunits: alpha(3), beta(3), gamma(1), delta(1), epsilon(1). CF(0) has three main subunits: a, b and c.

It localises to the cell inner membrane. Produces ATP from ADP in the presence of a proton gradient across the membrane. The protein is ATP synthase epsilon chain of Maricaulis maris (strain MCS10) (Caulobacter maris).